A 262-amino-acid polypeptide reads, in one-letter code: Small ribosomal subunit protein eS4 (262 aa).

Residues 42–104 (LPLLIFLRNR…TGEFFRLIYD (63 aa)) enclose the S4 RNA-binding domain.

It belongs to the eukaryotic ribosomal protein eS4 family.

The chain is Small ribosomal subunit protein eS4 (RpS4) from Lysiphlebus testaceipes (Greenbugs aphid parastoid).